Reading from the N-terminus, the 509-residue chain is Sulfoacetate--CoA ligase (509 aa).

The segment at 320-340 (AFSNPLDPGQRRIGSIGRPSG) is disordered.

This sequence belongs to the ATP-dependent AMP-binding enzyme family.

The protein resides in the cytoplasm. The enzyme catalyses sulfoacetate + ATP + CoA = sulfoacetyl-CoA + AMP + diphosphate. In terms of biological role, involved in the degradation of sulfoacetate, a widespread natural product. Catalyzes the CoA- and ATP-dependent conversion of sulfoacetate to sulfoacetyl-CoA and AMP. This Cupriavidus necator (strain ATCC 17699 / DSM 428 / KCTC 22496 / NCIMB 10442 / H16 / Stanier 337) (Ralstonia eutropha) protein is Sulfoacetate--CoA ligase.